The primary structure comprises 288 residues: 4-diphosphocytidyl-2-C-methyl-D-erythritol kinase (288 aa).

Residue Lys11 is part of the active site. ATP is bound at residue 95–105 (PVAAGMAGGSS). Residue Asp137 is part of the active site.

The protein belongs to the GHMP kinase family. IspE subfamily.

The catalysed reaction is 4-CDP-2-C-methyl-D-erythritol + ATP = 4-CDP-2-C-methyl-D-erythritol 2-phosphate + ADP + H(+). The protein operates within isoprenoid biosynthesis; isopentenyl diphosphate biosynthesis via DXP pathway; isopentenyl diphosphate from 1-deoxy-D-xylulose 5-phosphate: step 3/6. Its function is as follows. Catalyzes the phosphorylation of the position 2 hydroxy group of 4-diphosphocytidyl-2C-methyl-D-erythritol. The protein is 4-diphosphocytidyl-2-C-methyl-D-erythritol kinase of Lachnospira eligens (strain ATCC 27750 / DSM 3376 / VPI C15-48 / C15-B4) (Eubacterium eligens).